The chain runs to 460 residues: Putative 2,3-dihydroxypropane-1-sulfonate exporter (460 aa).

The Cytoplasmic portion of the chain corresponds to 1–18 (MSQTSSNPATLRLPFKEK). A helical membrane pass occupies residues 19–39 (LAYGLGDLGSNILLDIGTLYL). Over 40–46 (LKFYTDV) the chain is Periplasmic. Residues 47 to 67 (LGLPGTYGGIIFLIAKFFTAF) form a helical membrane-spanning segment. At 68-91 (TDMGTGIMLDSRRKIGPKGKFRPF) the chain is on the cytoplasmic side. The chain crosses the membrane as a helical span at residues 92–112 (VLYAAFPVTLLAIANFVGTPF). The Periplasmic portion of the chain corresponds to 113–122 (EVTGKTVVAT). A helical transmembrane segment spans residues 123–143 (MLFMLYGLVFSMMNCSYGAMV). Topologically, residues 144-161 (PAITKNPDERASLAAWRQ) are cytoplasmic. The helical transmembrane segment at 162–182 (GGATLGLLLCTVGFVPVMNLI) threads the bilayer. Residues 183 to 190 (EGNAQLSY) are Periplasmic-facing. The chain crosses the membrane as a helical span at residues 191–211 (IFAATLFSLFGLLFMWLCYAG). At 212–242 (VKERYVEVKPVDSAQKPGLLQSFRAIAGNRP) the chain is on the cytoplasmic side. The helical transmembrane segment at 243–263 (LFILCIANLCTLGAFNVKLAI) threads the bilayer. Over 264–275 (QVYYTQYVLNDP) the chain is Periplasmic. The helical transmembrane segment at 276 to 296 (ILLSWMGFFSMGCIFIGVFLM) threads the bilayer. The Cytoplasmic portion of the chain corresponds to 297–307 (PGAVRRFGKKK). The helical transmembrane segment at 308–328 (VYIGGLLIWVAGDLLNYFFGG) threads the bilayer. Position 329 (glycine 329) is a topological domain, periplasmic. Residues 330–350 (SVSFVAFSCLAFFGSAFVNSL) form a helical membrane-spanning segment. Residues 351–386 (NWALVSDTVEYGEWRTGVRSEGTVYTGFTFFRKVSQ) are Cytoplasmic-facing. A helical transmembrane segment spans residues 387 to 407 (ALAGFFPGWMLTQIGYIPNVV). Residues 408–418 (QSAGTVEGLRQ) are Periplasmic-facing. Residues 419 to 439 (LIFIYPCVLAVITIIAMGCFY) traverse the membrane as a helical segment. The Cytoplasmic portion of the chain corresponds to 440–460 (NLNEKMYVRIVEEIEARKHTV).

Belongs to the sodium:galactoside symporter (TC 2.A.2) family.

The protein resides in the cell inner membrane. Could be involved in the export of 2,3-dihydroxypropane-1-sulfonate (DHPS). The sequence is that of Putative 2,3-dihydroxypropane-1-sulfonate exporter (yihP) from Salmonella typhimurium (strain LT2 / SGSC1412 / ATCC 700720).